The following is a 567-amino-acid chain: MPVVDIDPDELRRLTGHRSKDDDELRQDLFGLGIEYEGETEDGDFKLEFEADRLDRLSVEGIARSLRYHAGDDRGVDIPDTNAPEWAIDVTDVPADRPYVTGAVIRGVDLDADALDSLIQLQEKLHATMGRKRAKGAIGIHDLAMLKGDTVDGDGTAARSLTYTGIDPDGDTFVPLDDDAERTPADVLTEHPTGETYADLLADHDTYPAIYDDIGLFSFPPVINGRRTEVTTDSRELFVELTGTDQWTIDRMCAIICYALDARGATIEDVTVDYPDRELHRPDFAVRTKHVSHDRIETLLGVEFTTEAVVDLAERAGLDATPTDDGYDVEIPPYRVDVRHPVDVVDDLGRAYDFNDLTPRYPDVNTIGGRTESSRLERSVRQALVGLGFEDLLNFNMTSEAENFDRMRLTPDHDAVGAAQPATIAEPYSQDFTILRTWALPSLAMVLETNTHHAYPQDLAEVGFAAHADGDTQTGVAERRTVAAVLARNDASYEDAKARLQALCDEFAVALETPPTTHPSFIDGRAATIEIDGQPAGVIGELHPGVIVEHDVEVPVAGFEFELDALR.

The 76-residue stretch at 284–359 (FAVRTKHVSH…RAYDFNDLTP (76 aa)) folds into the B5 domain. 4 residues coordinate Mg(2+): Asp337, Asp343, Asp346, and Asp347.

It belongs to the phenylalanyl-tRNA synthetase beta subunit family. Type 2 subfamily. In terms of assembly, tetramer of two alpha and two beta subunits. Requires Mg(2+) as cofactor.

It localises to the cytoplasm. The enzyme catalyses tRNA(Phe) + L-phenylalanine + ATP = L-phenylalanyl-tRNA(Phe) + AMP + diphosphate + H(+). The protein is Phenylalanine--tRNA ligase beta subunit of Halobacterium salinarum (strain ATCC 29341 / DSM 671 / R1).